We begin with the raw amino-acid sequence, 236 residues long: 2-C-methyl-D-erythritol 4-phosphate cytidylyltransferase (236 aa).

This sequence belongs to the IspD/TarI cytidylyltransferase family. IspD subfamily.

It carries out the reaction 2-C-methyl-D-erythritol 4-phosphate + CTP + H(+) = 4-CDP-2-C-methyl-D-erythritol + diphosphate. The protein operates within isoprenoid biosynthesis; isopentenyl diphosphate biosynthesis via DXP pathway; isopentenyl diphosphate from 1-deoxy-D-xylulose 5-phosphate: step 2/6. Catalyzes the formation of 4-diphosphocytidyl-2-C-methyl-D-erythritol from CTP and 2-C-methyl-D-erythritol 4-phosphate (MEP). In Burkholderia cenocepacia (strain ATCC BAA-245 / DSM 16553 / LMG 16656 / NCTC 13227 / J2315 / CF5610) (Burkholderia cepacia (strain J2315)), this protein is 2-C-methyl-D-erythritol 4-phosphate cytidylyltransferase.